The following is a 258-amino-acid chain: Acyl-[acyl-carrier-protein]--UDP-N-acetylglucosamine O-acyltransferase (258 aa).

Belongs to the transferase hexapeptide repeat family. LpxA subfamily. In terms of assembly, homotrimer.

It localises to the cytoplasm. The catalysed reaction is a (3R)-hydroxyacyl-[ACP] + UDP-N-acetyl-alpha-D-glucosamine = a UDP-3-O-[(3R)-3-hydroxyacyl]-N-acetyl-alpha-D-glucosamine + holo-[ACP]. Its pathway is glycolipid biosynthesis; lipid IV(A) biosynthesis; lipid IV(A) from (3R)-3-hydroxytetradecanoyl-[acyl-carrier-protein] and UDP-N-acetyl-alpha-D-glucosamine: step 1/6. Its function is as follows. Involved in the biosynthesis of lipid A, a phosphorylated glycolipid that anchors the lipopolysaccharide to the outer membrane of the cell. This is Acyl-[acyl-carrier-protein]--UDP-N-acetylglucosamine O-acyltransferase from Neisseria meningitidis serogroup C / serotype 2a (strain ATCC 700532 / DSM 15464 / FAM18).